A 75-amino-acid polypeptide reads, in one-letter code: Small ribosomal subunit protein bS18 (75 aa).

Belongs to the bacterial ribosomal protein bS18 family. As to quaternary structure, part of the 30S ribosomal subunit. Forms a tight heterodimer with protein bS6.

In terms of biological role, binds as a heterodimer with protein bS6 to the central domain of the 16S rRNA, where it helps stabilize the platform of the 30S subunit. The polypeptide is Small ribosomal subunit protein bS18 (Saccharophagus degradans (strain 2-40 / ATCC 43961 / DSM 17024)).